Consider the following 172-residue polypeptide: Putative phosphoesterase BCE_1348 (172 aa).

Histidine 34 functions as the Proton donor in the catalytic mechanism. 2 consecutive short sequence motifs (HXTX) follow at residues 34-37 and 115-118; these read HITL and HLTI. Histidine 115 acts as the Proton acceptor in catalysis.

Belongs to the 2H phosphoesterase superfamily. YjcG family.

This is Putative phosphoesterase BCE_1348 from Bacillus cereus (strain ATCC 10987 / NRS 248).